We begin with the raw amino-acid sequence, 302 residues long: Sulfate adenylyltransferase subunit 2 (302 aa).

The protein belongs to the PAPS reductase family. CysD subfamily. Heterodimer composed of CysD, the smaller subunit, and CysN.

The catalysed reaction is sulfate + ATP + H(+) = adenosine 5'-phosphosulfate + diphosphate. It participates in sulfur metabolism; hydrogen sulfide biosynthesis; sulfite from sulfate: step 1/3. Functionally, with CysN forms the ATP sulfurylase (ATPS) that catalyzes the adenylation of sulfate producing adenosine 5'-phosphosulfate (APS) and diphosphate, the first enzymatic step in sulfur assimilation pathway. APS synthesis involves the formation of a high-energy phosphoric-sulfuric acid anhydride bond driven by GTP hydrolysis by CysN coupled to ATP hydrolysis by CysD. This chain is Sulfate adenylyltransferase subunit 2, found in Xanthomonas euvesicatoria pv. vesicatoria (strain 85-10) (Xanthomonas campestris pv. vesicatoria).